A 306-amino-acid polypeptide reads, in one-letter code: Tyrosine recombinase XerC (306 aa).

The Core-binding (CB) domain occupies 10 to 94; sequence ARCHSYLQQF…AVKQWGEFLL (85 aa). One can recognise a Tyr recombinase domain in the interval 115–294; sequence PLPKNIDVDS…DFQHLAKVYD (180 aa). Residues Arg-154, Lys-178, His-246, Arg-249, and His-272 contribute to the active site. Tyr-281 (O-(3'-phospho-DNA)-tyrosine intermediate) is an active-site residue.

This sequence belongs to the 'phage' integrase family. XerC subfamily. Forms a cyclic heterotetrameric complex composed of two molecules of XerC and two molecules of XerD.

Its subcellular location is the cytoplasm. Its function is as follows. Site-specific tyrosine recombinase, which acts by catalyzing the cutting and rejoining of the recombining DNA molecules. The XerC-XerD complex is essential to convert dimers of the bacterial chromosome into monomers to permit their segregation at cell division. It also contributes to the segregational stability of plasmids. The protein is Tyrosine recombinase XerC of Shewanella oneidensis (strain ATCC 700550 / JCM 31522 / CIP 106686 / LMG 19005 / NCIMB 14063 / MR-1).